A 462-amino-acid chain; its full sequence is MAKFRRRTCIILSLFIVFIFSLMMGLKMLWPNAASFGPPFGLDLLPELRPPNTHLENKADFQRSDRIDMETNTKDLKGAGVTVHPPRASEVNLEELPPLNYFVHAFYYSWYGNPQFDGKYVHWNHPVLEHWDPRIAKNYPQGRHSPPDDIGSSFYPELGSYSSRDPSVIETHMKQMRSASIGVLALSWYPPDASDENGEATDYLVPTILDKAHKYNLKVTFHIEPYSNRDDQNMHQNVKYIIDKYGNHPAFYRYKTRMGHSLPMFYIYDSYITKPKTWANLLTPSGSQSVRGSPYDGLFIALLVEEKHKYDILQSGFDGIYTYFATNGFTYGSSHQNWNKLKSFCEKNNMIFIPSVGPGYIDTSIRPWNTQNTRNRINGKYYEVGLSAALQTQPSLISITSFNEWHEGTQIEKAVPKRTANTVYLDYRPHKPSLYLEITRKWSEKYSKERMTYALDQQLPAS.

At 1-9 (MAKFRRRTC) the chain is on the cytoplasmic side. The helical; Signal-anchor for type II membrane protein transmembrane segment at 10 to 30 (IILSLFIVFIFSLMMGLKMLW) threads the bilayer. The Lumenal portion of the chain corresponds to 31-462 (PNAASFGPPF…YALDQQLPAS (432 aa)). Residues 60–462 (DFQRSDRIDM…YALDQQLPAS (403 aa)) are catalytic.

Belongs to the glycosyl hydrolase 99 family. Undergoes proteolytic cleavage in the C-terminal region. In terms of tissue distribution, highly expressed in the liver and kidney.

The protein localises to the golgi apparatus membrane. The catalysed reaction is N-{alpha-Glc-(1-&gt;3)-alpha-Man-(1-&gt;2)-alpha-Man-(1-&gt;2)-alpha-Man-(1-&gt;3)-[alpha-Man-(1-&gt;2)-alpha-Man-(1-&gt;3)-[alpha-Man-(1-&gt;2)-alpha-Man-(1-&gt;6)]-alpha-Man-(1-&gt;6)]-beta-Man-(1-&gt;4)-beta-GlcNAc-(1-&gt;4)-beta-GlcNAc}-L-asparaginyl-[protein] + H2O = alpha-D-glucosyl-(1-&gt;3)-D-mannopyranose + N(4)-{alpha-D-Man-(1-&gt;2)-alpha-D-Man-(1-&gt;3)-[alpha-D-Man-(1-&gt;2)-alpha-D-Man-(1-&gt;3)-[alpha-D-Man-(1-&gt;2)-alpha-D-Man-(1-&gt;6)]-alpha-D-Man-(1-&gt;6)]-beta-D-Man-(1-&gt;4)-beta-D-GlaNAc-(1-&gt;4)-beta-D-GlcNAc}-L-asparaginyl-[protein] (N-glucan mannose isomer 8A1,2,3B1,2). The polypeptide is Glycoprotein endo-alpha-1,2-mannosidase (Manea) (Rattus norvegicus (Rat)).